A 274-amino-acid chain; its full sequence is MAVVKVKPTSPGRRGVVKIVHKHLHKGKPEASLLEPQMQNAGRNNNGHITVRHKGGGHKHHYRVVDFRRNKDGIPAKVERIEYDPNRTAHIALICYADGERSYIIAPRGLEAGQTVLNGAEAPIKAGNTLPIRNIPVGSTIHCVEMMPGKGAQIARSAGTSVTLMAREGIYAQVRLRSGEVRKIHIDCRATIGEVSNEEHNLRQYGKAGAKRWLGIRPTVRGVAMNPVDHPHGGGEGRTGEGQAPVSPWNTLTKGYRTRNNKRTQTFIVSRRKK.

The disordered stretch occupies residues 224–254 (AMNPVDHPHGGGEGRTGEGQAPVSPWNTLTK). The segment covering 229–239 (DHPHGGGEGRT) has biased composition (basic and acidic residues).

This sequence belongs to the universal ribosomal protein uL2 family. Part of the 50S ribosomal subunit. Forms a bridge to the 30S subunit in the 70S ribosome.

In terms of biological role, one of the primary rRNA binding proteins. Required for association of the 30S and 50S subunits to form the 70S ribosome, for tRNA binding and peptide bond formation. It has been suggested to have peptidyltransferase activity; this is somewhat controversial. Makes several contacts with the 16S rRNA in the 70S ribosome. This is Large ribosomal subunit protein uL2 from Leptothrix cholodnii (strain ATCC 51168 / LMG 8142 / SP-6) (Leptothrix discophora (strain SP-6)).